A 102-amino-acid chain; its full sequence is MILLKLYLTLAAILCQSRGMTSLDLDDLMTTNPEIQNEIINKHNDLRRTVDPPAKNMLKMSWDNIIAESAKRAALRCNYKEHTSIAERTIGGCGVWEKILSC.

The signal sequence occupies residues 1-19; sequence MILLKLYLTLAAILCQSRG. The SCP domain occupies 41–80; sequence NKHNDLRRTVDPPAKNMLKMSWDNIIAESAKRAALRCNYK.

It belongs to the CRISP family. Contains 8 disulfide bonds. Expressed by the venom gland.

It localises to the secreted. In terms of biological role, blocks ryanodine receptors, and potassium channels. In Varanus varius (Lace monitor lizard), this protein is Cysteine-rich venom protein VAR9.